The sequence spans 257 residues: Large ribosomal subunit protein uL2 (257 aa).

The disordered stretch occupies residues 207–257 (VDHPHGGGNHQHVGHPTTLKRSSPPGQKAGKVAARRTGLIRGGNKEGAADN).

The protein belongs to the universal ribosomal protein uL2 family. In terms of assembly, component of the large ribosomal subunit.

The protein resides in the cytoplasm. Functionally, component of the large ribosomal subunit. The ribosome is a large ribonucleoprotein complex responsible for the synthesis of proteins in the cell. In Entamoeba histolytica (strain ATCC 30459 / HM-1:IMSS / ABRM), this protein is Large ribosomal subunit protein uL2 (RPL8).